The following is a 156-amino-acid chain: Ribosome maturation factor RimP (156 aa).

It belongs to the RimP family.

It localises to the cytoplasm. Its function is as follows. Required for maturation of 30S ribosomal subunits. The polypeptide is Ribosome maturation factor RimP (Oceanobacillus iheyensis (strain DSM 14371 / CIP 107618 / JCM 11309 / KCTC 3954 / HTE831)).